Reading from the N-terminus, the 62-residue chain is Disintegrin atropoimin (62 aa).

One can recognise a Disintegrin domain in the interval 1–62 (EAGEECDCGT…ADCPRNGLYG (62 aa)). Disulfide bonds link C6/C21, C8/C16, C15/C38, C29/C35, and C34/C48. The Cell attachment site motif lies at 41 to 42 (GD).

Belongs to the venom metalloproteinase (M12B) family. P-II subfamily. P-IIa sub-subfamily. Monomer. In terms of tissue distribution, expressed by the venom gland.

The protein resides in the secreted. Inhibits ADP- (IC(50)=63 nM) and collagen-induced (IC(50)=53 nM) aggregation of human platelets. In vitro, inhibits adhesion of endothelial cells to vitronectin, type-I collagen and, to a lower degree, fibronectin and laminin. This Metlapilcoatlus mexicanus (Central American jumping pitviper) protein is Disintegrin atropoimin.